A 216-amino-acid polypeptide reads, in one-letter code: Ribonuclease HII (216 aa).

Residues 33–216 form the RNase H type-2 domain; it reads WPVAGADEAG…RMSFRPFRQL (184 aa). Residues Asp39, Glu40, and Asp130 each coordinate a divalent metal cation.

It belongs to the RNase HII family. Mn(2+) serves as cofactor. Mg(2+) is required as a cofactor.

It is found in the cytoplasm. It catalyses the reaction Endonucleolytic cleavage to 5'-phosphomonoester.. In terms of biological role, endonuclease that specifically degrades the RNA of RNA-DNA hybrids. The protein is Ribonuclease HII of Sinorhizobium medicae (strain WSM419) (Ensifer medicae).